A 175-amino-acid chain; its full sequence is Ribosome maturation factor RimM (175 aa).

In terms of domain architecture, PRC barrel spans 96–175 (EGDYYWHDLI…TIEVDWDAGF (80 aa)).

This sequence belongs to the RimM family. In terms of assembly, binds ribosomal protein uS19.

The protein localises to the cytoplasm. In terms of biological role, an accessory protein needed during the final step in the assembly of 30S ribosomal subunit, possibly for assembly of the head region. Essential for efficient processing of 16S rRNA. May be needed both before and after RbfA during the maturation of 16S rRNA. It has affinity for free ribosomal 30S subunits but not for 70S ribosomes. This chain is Ribosome maturation factor RimM, found in Actinobacillus succinogenes (strain ATCC 55618 / DSM 22257 / CCUG 43843 / 130Z).